The primary structure comprises 116 residues: Non-specific lipid transfer protein GPI-anchored 17 (116 aa).

Positions 1–24 are cleaved as a signal peptide; that stretch reads MKIGVVLVLLTVFVVVMSSTSVSA. 3 disulfides stabilise this stretch: Cys-31/Cys-74, Cys-42/Cys-58, and Cys-59/Cys-99. A lipid anchor (GPI-anchor amidated asparagine) is attached at Asn-107. The propeptide at 108–116 is removed in mature form; the sequence is GKNFKNTSL. Asn-113 carries an N-linked (GlcNAc...) asparagine glycan.

It belongs to the plant LTP family. As to expression, expressed in seedlings, preferentially in roots.

It localises to the cell membrane. Its function is as follows. Probable lipid transfer protein. The sequence is that of Non-specific lipid transfer protein GPI-anchored 17 from Arabidopsis thaliana (Mouse-ear cress).